Reading from the N-terminus, the 210-residue chain is Secreted effector protein SteA (210 aa).

The protein localises to the secreted. The protein resides in the host cytoplasm. In terms of biological role, effector proteins function to alter host cell physiology and promote bacterial survival in host tissues. Could be required for passage of bacteria from the peritoneal cavity into the spleen, for survival and replication within host cells, or for avoiding host immune response. This Salmonella typhimurium (strain 14028s / SGSC 2262) protein is Secreted effector protein SteA (steA).